The chain runs to 176 residues: Gamma-crystallin M2 (176 aa).

2 consecutive Beta/gamma crystallin 'Greek key' domains span residues 2–40 (GKVI…RVEG) and 41–83 (GCWV…RIIP). The connecting peptide stretch occupies residues 84 to 88 (QYRGS). Beta/gamma crystallin 'Greek key' domains follow at residues 89-129 (YRMR…HVMD) and 130-172 (GYWI…RRIM).

Belongs to the beta/gamma-crystallin family. In terms of assembly, monomer.

In terms of biological role, crystallins are the dominant structural components of the vertebrate eye lens. The protein is Gamma-crystallin M2 (GM2) of Chiloscyllium indicum (Slender bamboo shark).